Here is a 358-residue protein sequence, read N- to C-terminus: MDRVLVAMSGGVDSSVTAALLKEQGYEVIGGTMEIFPDYEQPPLDEGGCCSLSSIEDARRVAHHIGIRHYTFNLKKVFEEEVINNFVNEYKNARTPNPCVVCNNEIKFRSLLKKALELDADYIATGHYAIVEHNVNGKHLLKKAKDVDKDQTYMLYGLTQFQLSHTLMPLGNYTKQEVRQMAKDFGFRIHNKPESQEICFVPDNNYTRFLDENYPGLGKPGPVMDTDGNILGKHKGLHHYTIGQRRGLGISLGYPVYVVKLDREKNAVIIGPEEEVYSKSLIANKVNWISIDKLTEPIKVTARIRYNSPESHAKIYPVNDNEVKVVFDKKQRAVTPGQSVVFYDGKVVVGGGIIKENF.

ATP is bound by residues 7 to 14 and Met-33; that span reads AMSGGVDS. Cys-102 serves as the catalytic Nucleophile. A disulfide bridge connects residues Cys-102 and Cys-199. ATP is bound at residue Gly-126. Positions 149-151 are interaction with tRNA; that stretch reads KDQ. Cys-199 (cysteine persulfide intermediate) is an active-site residue. The interaction with tRNA stretch occupies residues 305–306; that stretch reads RY.

The protein belongs to the MnmA/TRMU family.

Its subcellular location is the cytoplasm. It carries out the reaction S-sulfanyl-L-cysteinyl-[protein] + uridine(34) in tRNA + AH2 + ATP = 2-thiouridine(34) in tRNA + L-cysteinyl-[protein] + A + AMP + diphosphate + H(+). Functionally, catalyzes the 2-thiolation of uridine at the wobble position (U34) of tRNA, leading to the formation of s(2)U34. The chain is tRNA-specific 2-thiouridylase MnmA from Halothermothrix orenii (strain H 168 / OCM 544 / DSM 9562).